The sequence spans 166 residues: MPAWLADGRTLAGLDLGDKTIGVAVSDRGFAFAHPRPVIMRRKFSLDAAVLLALLKKENVGAVAIGLPINMDGSEGPRAQKSRAFVRNMAQLSDLPFVFWDERLSTVAAERTLIEMDFSRAKRAGKIDSAAAAFILQGVLDRLQSLDSAARTELGGRTEPGPTDAA.

Belongs to the YqgF nuclease family.

The protein localises to the cytoplasm. In terms of biological role, could be a nuclease involved in processing of the 5'-end of pre-16S rRNA. This chain is Putative pre-16S rRNA nuclease, found in Mesorhizobium japonicum (strain LMG 29417 / CECT 9101 / MAFF 303099) (Mesorhizobium loti (strain MAFF 303099)).